Here is a 211-residue protein sequence, read N- to C-terminus: Large ribosomal subunit protein uL4 (211 aa).

Residues 40–80 (QQAHSRQGTASTLTRSEVRGGGRKPYKQKGTGRARQGSIRT) form a disordered region. Over residues 41–54 (QAHSRQGTASTLTR) the composition is skewed to polar residues. Residues 60–71 (GGRKPYKQKGTG) show a composition bias toward basic residues.

Belongs to the universal ribosomal protein uL4 family. In terms of assembly, part of the 50S ribosomal subunit.

Its function is as follows. One of the primary rRNA binding proteins, this protein initially binds near the 5'-end of the 23S rRNA. It is important during the early stages of 50S assembly. It makes multiple contacts with different domains of the 23S rRNA in the assembled 50S subunit and ribosome. Functionally, forms part of the polypeptide exit tunnel. The polypeptide is Large ribosomal subunit protein uL4 (Prochlorococcus marinus (strain MIT 9211)).